A 76-amino-acid polypeptide reads, in one-letter code: Exodeoxyribonuclease 7 small subunit (76 aa).

Belongs to the XseB family. As to quaternary structure, heterooligomer composed of large and small subunits.

The protein localises to the cytoplasm. It carries out the reaction Exonucleolytic cleavage in either 5'- to 3'- or 3'- to 5'-direction to yield nucleoside 5'-phosphates.. Functionally, bidirectionally degrades single-stranded DNA into large acid-insoluble oligonucleotides, which are then degraded further into small acid-soluble oligonucleotides. The chain is Exodeoxyribonuclease 7 small subunit from Arthrobacter sp. (strain FB24).